A 524-amino-acid chain; its full sequence is Lycopene epsilon cyclase, chloroplastic (524 aa).

The transit peptide at 1–45 directs the protein to the chloroplast; sequence MECVGARNFAAMAVSTFPSWSCRRKFPVVKRYSYRNIRFGLCSVR. 111-139 is a binding site for NAD(+); sequence LVVIGCGPAGLALAAESAKLGLKVGLIGP. Helical transmembrane passes span 441-461 and 475-495; these read FFLFGLALIVQFDTEGIRSFF and FLGSTLTSGDLVLFALYMFVI.

It belongs to the lycopene cyclase family.

Its subcellular location is the plastid. It is found in the chloroplast membrane. It catalyses the reaction a carotenoid psi-end group = a carotenoid epsilon-end group. It functions in the pathway carotenoid biosynthesis; alpha-zeacarotene biosynthesis. It participates in carotenoid biosynthesis; delta-carotene biosynthesis. Functionally, involved in carotenoid biosynthesis. Catalyzes the single epsilon-cyclization reaction which converts lycopene to delta-carotene and neurosporene to alpha-zeacarotene. Required for lutein biosynthesis. This is Lycopene epsilon cyclase, chloroplastic from Arabidopsis thaliana (Mouse-ear cress).